Here is a 155-residue protein sequence, read N- to C-terminus: Ribosome maturation factor RimP (155 aa).

This sequence belongs to the RimP family.

It localises to the cytoplasm. In terms of biological role, required for maturation of 30S ribosomal subunits. In Parabacteroides distasonis (strain ATCC 8503 / DSM 20701 / CIP 104284 / JCM 5825 / NCTC 11152), this protein is Ribosome maturation factor RimP.